The chain runs to 246 residues: UDP-N-acetyl-D-mannosaminuronic acid transferase (246 aa).

This sequence belongs to the glycosyltransferase 26 family.

It catalyses the reaction UDP-N-acetyl-alpha-D-mannosaminouronate + N-acetyl-alpha-D-glucosaminyl-di-trans,octa-cis-undecaprenyl diphosphate = beta-D-ManNAcA-(1-&gt;4)-alpha-D-GlcNAc-di-trans,octa-cis-undecaprenyl diphosphate + UDP + H(+). The protein operates within bacterial outer membrane biogenesis; enterobacterial common antigen biosynthesis. In terms of biological role, catalyzes the synthesis of Und-PP-GlcNAc-ManNAcA (Lipid II), the second lipid-linked intermediate involved in enterobacterial common antigen (ECA) synthesis. The chain is UDP-N-acetyl-D-mannosaminuronic acid transferase from Klebsiella pneumoniae (strain 342).